Reading from the N-terminus, the 136-residue chain is UPF0102 protein BBta_0181 (136 aa).

It belongs to the UPF0102 family.

This Bradyrhizobium sp. (strain BTAi1 / ATCC BAA-1182) protein is UPF0102 protein BBta_0181.